The following is a 186-amino-acid chain: Methyl-CpG-binding domain protein 3-like 1 (186 aa).

The segment at 1 to 104 (MGKTSQRKQC…TSTDTVASAS (104 aa)) is transcription repressor.

It belongs to the MBD3L family. Highly expressed in testis. Not detected in the other tissues tested.

It is found in the nucleus. Functionally, transcriptional repressor. This chain is Methyl-CpG-binding domain protein 3-like 1 (Mbd3l1), found in Mus musculus (Mouse).